Consider the following 407-residue polypeptide: Ameloblastin (407 aa).

The first 26 residues, 1-26 (MSASKIPLFKMKGLILFLSLVKMSLA), serve as a signal peptide directing secretion. Position 42 is a hydroxyproline (Pro42). Residue Ser48 is modified to Phosphoserine. Disordered stretches follow at residues 124-143 (GVQVTPQKPGPQPPMHPGQL) and 259-304 (QNSP…ENPA).

Belongs to the ameloblastin family. In terms of tissue distribution, ameloblast-specific.

It is found in the secreted. The protein resides in the extracellular space. It localises to the extracellular matrix. Involved in the mineralization and structural organization of enamel. The polypeptide is Ameloblastin (Ambn) (Mus musculus (Mouse)).